The primary structure comprises 218 residues: MPVKIVLLGPPGAGKGTQAKSISNRYSIPHISTGDIFRKNISENTPLGIEAKSYMDNGQLVPDEVTINMVKDRLQQDDCKNGYLLDGFPRTVHQAEALDNFLTEREESIDTALLIEVPKEFILERMTGRRVCPSCGASYHIKFNPPTNDGKCDLCGSDVIQRKDDTEETVKERLDVYENQTQPLIDFYKNKKQLSVVDGTQAINEVFESICKILGSDK.

G12–T17 contacts ATP. The NMP stretch occupies residues S32–V61. Residues T33, R38, Q59–V61, G87–R90, and Q94 contribute to the AMP site. Residues G128 to D165 form an LID region. Residue R129 coordinates ATP. Residues C132 and C135 each contribute to the Zn(2+) site. ATP is bound at residue S138–Y139. Positions 152 and 155 each coordinate Zn(2+). The AMP site is built by R162 and R173. ATP is bound at residue Q201.

Belongs to the adenylate kinase family. In terms of assembly, monomer.

The protein resides in the cytoplasm. It carries out the reaction AMP + ATP = 2 ADP. Its pathway is purine metabolism; AMP biosynthesis via salvage pathway; AMP from ADP: step 1/1. In terms of biological role, catalyzes the reversible transfer of the terminal phosphate group between ATP and AMP. Plays an important role in cellular energy homeostasis and in adenine nucleotide metabolism. This chain is Adenylate kinase, found in Clostridium perfringens (strain 13 / Type A).